A 1140-amino-acid chain; its full sequence is Envelopment polyprotein (1140 aa).

The first 17 residues, 1 to 17 (MVGWVCISLVVLATTTA), serve as a signal peptide directing secretion. Residues 18-489 (GLTRNLYELK…VPGLHGWATT (472 aa)) are Lumenal-facing. Intrachain disulfides connect C30-C155, C64-C161, C113-C132, C137-C142, C179-C189, and C214-C251. N138 is a glycosylation site (N-linked (GlcNAc...) asparagine; by host). Residue N351 is glycosylated (N-linked (GlcNAc...) asparagine; by host). 4 cysteine pairs are disulfide-bonded: C380–C439, C384–C393, C409–C428, and C456–C479. The N-linked (GlcNAc...) asparagine; by host glycan is linked to N403. A helical membrane pass occupies residues 490–510 (ALLITFCFGWLLIPTITMIIL). Residues 511–631 (KILRLLTFSC…LGVFRYKSRC (121 aa)) are Cytoplasmic-facing. The segment at 520–537 (CSHYSTESKFKAILERVK) is binding to the ribonucleoprotein. 2 CCHC-type zinc fingers span residues 549–569 (CDVC…KKSC) and 574–595 (CPYC…FSIC). 3 binding to the ribonucleoprotein regions span residues 592–609 (FSIC…KKSL), 596–607 (KLTNRFQENLKK), and 615–629 (KQGC…RYKS). Residues 611–638 (RPEVKQGCYRTLGVFRYKSRCYVGLVWG) are interaction with host TRAF3. The ITAM domain maps to 615 to 638 (KQGCYRTLGVFRYKSRCYVGLVWG). Phosphotyrosine; by host occurs at positions 619 and 632. The short motif at 619-622 (YRTL) is the YxxL element. Residues 632–652 (YVGLVWGVLLTTELIVWAASA) form a helical membrane-spanning segment. Residues 653 to 1108 (DTPLMESGWS…EWLLGILNGN (456 aa)) are Lumenal-facing. 8 disulfide bridges follow: C739–C774, C743–C781, C755–C888, C769–C899, C784–C907, C810–C819, C827–C836, and C867–C871. The interval 761 to 781 (YQYETSWGCNPPDCPGVGTGC) is fusion loop. N-linked (GlcNAc...) asparagine; by host glycosylation is present at N931. 5 disulfide bridges follow: C973/C1003, C996/C1048, C1013/C1018, C1049/C1054, and C1088/C1092. A helical membrane pass occupies residues 1109-1129 (WVVVAVLIVILILSILLFSFF). A binding to the ribonucleoprotein region spans residues 1125-1140 (LFSFFCPIRGRKNKSN). Residues 1130–1140 (CPIRGRKNKSN) are Cytoplasmic-facing.

The protein belongs to the hantavirus envelope glycoprotein family. As to quaternary structure, homodimer. Homotetramer; forms heterotetrameric Gn-Gc spikes in the pre-fusion conformation. Interacts (via C-terminus) with the nucleoprotein. Interacts with host TUFM; this interaction contributes to the virus-induced degradation of mitochondria by autophagy, which leads to degradation of host MAVS and inhibition of type I interferon (IFN) responses. Interacts with host MAP1LC3B; this interaction contributes to the virus-induced degradation of mitochondria by autophagy, which leads to degradation of host MAVS and inhibition of type I interferon (IFN) responses. Interacts (via C-terminus) with host TRAF3 (via N-terminus); this interaction inhibits the formation of TRAF3-TBK1 complexes. Homodimer. Homotetramer; forms heterotetrameric Gn-Gc spikes in the pre-fusion conformation. Homotrimer; forms homotrimer in the post-fusion conformation at acidic pH. Interacts (via C-terminus) with the nucleoprotein. Post-translationally, envelope polyprotein precursor is quickly cleaved in vivo just after synthesis, presumably by host signal peptidase.

The protein resides in the virion membrane. It is found in the host cell surface. Its subcellular location is the host Golgi apparatus membrane. It localises to the host endoplasmic reticulum membrane. The protein localises to the host mitochondrion. In terms of biological role, forms homotetramers with glycoprotein C at the surface of the virion. Attaches the virion to host cell receptors including integrin ITGAV/ITGB3. This attachment induces virion internalization predominantly through clathrin-dependent endocytosis. Mediates the assembly and budding of infectious virus particles through its interaction with the nucleocapsid protein and the viral genome. May dysregulate normal immune and endothelial cell responses through an ITAM motif. Translocates to mitochondria, binds to host TUFM and recruits MAP1LC3B. These interactions induce mitochondrial autophagy and therefore destruction of host MAVS leading to inhibition of type I interferon (IFN) responses. Concomitant breakdown of glycoprotein N is apparently prevented by the nucleoprotein that may inhibit Gn-stimulated autophagosome-lysosome fusion. Interacts with the viral genomic RNA. Inhibits the host RIG-I/TBK1 pathway by disrupting the formation of TBK1-TRAF3 complexes and downstream signaling responses required for IFN-beta transcription. Forms homotetramers with glycoprotein N at the surface of the virion. Attaches the virion to host cell receptors including integrin ITGAV/ITGB3. This attachment induces virion internalization predominantly through clathrin-dependent endocytosis. Class II fusion protein that promotes fusion of viral membrane with host endosomal membrane after endocytosis of the virion. This chain is Envelopment polyprotein (GP), found in Homo sapiens (Human).